A 155-amino-acid chain; its full sequence is Protein-export protein SecB (155 aa).

It belongs to the SecB family. As to quaternary structure, homotetramer, a dimer of dimers. One homotetramer interacts with 1 SecA dimer.

It is found in the cytoplasm. One of the proteins required for the normal export of preproteins out of the cell cytoplasm. It is a molecular chaperone that binds to a subset of precursor proteins, maintaining them in a translocation-competent state. It also specifically binds to its receptor SecA. In Klebsiella pneumoniae subsp. pneumoniae (strain ATCC 700721 / MGH 78578), this protein is Protein-export protein SecB.